We begin with the raw amino-acid sequence, 286 residues long: Putative transcription factor kapC (286 aa).

Positions 1–10 (MQPALAPAPH) are enriched in pro residues. The segment at 1–120 (MQPALAPAPH…QNRAAQRAFR (120 aa)) is disordered. The span at 26–40 (HDQLLAAHQHLSHPQ) shows a compositional bias: low complexity. Residues 41-54 (QPRPQAPATQPPHM) are compositionally biased toward pro residues. A compositionally biased stretch (polar residues) spans 55-67 (QPNTASPRDQNNI). Residues 81 to 92 (PQTPPQPEPAPQ) are compositionally biased toward pro residues. Residues 102–165 (PLSTSKRAAQ…EYIINLQTRL (64 aa)) form the bZIP domain. The basic motif stretch occupies residues 103–126 (LSTSKRAAQNRAAQRAFRQRKESY). Over residues 108 to 118 (RAAQNRAAQRA) the composition is skewed to low complexity. The leucine-zipper stretch occupies residues 130–161 (LEEQVKHQEAITEEYKALHAENYQLREYIINL). The tract at residues 197 to 286 (RGNAASAGPA…QEPDGLPVVS (90 aa)) is disordered. Over residues 198 to 222 (GNAASAGPAPAGPGPQQSQPNQNQG) the composition is skewed to low complexity.

The protein belongs to the bZIP family.

It localises to the nucleus. Its function is as follows. Putative transcription factor. The polypeptide is Putative transcription factor kapC (kapC) (Aspergillus terreus (strain NIH 2624 / FGSC A1156)).